The following is a 188-amino-acid chain: Protein YecM (188 aa).

To H.influenzae HI_1582/HI_1581.

This Escherichia coli (strain K12) protein is Protein YecM (yecM).